The chain runs to 171 residues: 3-hydroxydecanoyl-[acyl-carrier-protein] dehydratase (171 aa).

Residue H71 is part of the active site.

Belongs to the thioester dehydratase family. FabA subfamily. As to quaternary structure, homodimer.

Its subcellular location is the cytoplasm. It carries out the reaction a (3R)-hydroxyacyl-[ACP] = a (2E)-enoyl-[ACP] + H2O. The catalysed reaction is (3R)-hydroxydecanoyl-[ACP] = (2E)-decenoyl-[ACP] + H2O. It catalyses the reaction (2E)-decenoyl-[ACP] = (3Z)-decenoyl-[ACP]. It functions in the pathway lipid metabolism; fatty acid biosynthesis. Functionally, necessary for the introduction of cis unsaturation into fatty acids. Catalyzes the dehydration of (3R)-3-hydroxydecanoyl-ACP to E-(2)-decenoyl-ACP and then its isomerization to Z-(3)-decenoyl-ACP. Can catalyze the dehydratase reaction for beta-hydroxyacyl-ACPs with saturated chain lengths up to 16:0, being most active on intermediate chain length. The sequence is that of 3-hydroxydecanoyl-[acyl-carrier-protein] dehydratase from Sinorhizobium medicae (strain WSM419) (Ensifer medicae).